A 346-amino-acid chain; its full sequence is Probable dual-specificity RNA methyltransferase RlmN (346 aa).

Glu-90 serves as the catalytic Proton acceptor. Residues 96-330 (TRDRLTVCVS…VSVRASRGLD (235 aa)) enclose the Radical SAM core domain. Cys-103 and Cys-335 are joined by a disulfide. Residues Cys-110, Cys-114, and Cys-117 each contribute to the [4Fe-4S] cluster site. S-adenosyl-L-methionine contacts are provided by residues 157–158 (GE), Ser-187, 216–218 (SLH), and Asn-292. Cys-335 serves as the catalytic S-methylcysteine intermediate.

The protein belongs to the radical SAM superfamily. RlmN family. [4Fe-4S] cluster serves as cofactor.

The protein localises to the cytoplasm. It catalyses the reaction adenosine(2503) in 23S rRNA + 2 reduced [2Fe-2S]-[ferredoxin] + 2 S-adenosyl-L-methionine = 2-methyladenosine(2503) in 23S rRNA + 5'-deoxyadenosine + L-methionine + 2 oxidized [2Fe-2S]-[ferredoxin] + S-adenosyl-L-homocysteine. The enzyme catalyses adenosine(37) in tRNA + 2 reduced [2Fe-2S]-[ferredoxin] + 2 S-adenosyl-L-methionine = 2-methyladenosine(37) in tRNA + 5'-deoxyadenosine + L-methionine + 2 oxidized [2Fe-2S]-[ferredoxin] + S-adenosyl-L-homocysteine. Functionally, specifically methylates position 2 of adenine 2503 in 23S rRNA and position 2 of adenine 37 in tRNAs. This Synechococcus sp. (strain RCC307) protein is Probable dual-specificity RNA methyltransferase RlmN.